A 368-amino-acid chain; its full sequence is NAD(P)H-quinone oxidoreductase subunit 1, chloroplastic (368 aa).

6 helical membrane passes run 27–47 (FIWI…GVLV), 97–117 (WLFN…YLVI), 130–150 (IGVF…LMAG), 269–289 (SSLF…PFLL), 308–328 (IIIG…IAIM), and 348–368 (FLLP…AFLL).

This sequence belongs to the complex I subunit 1 family. In terms of assembly, NDH is composed of at least 16 different subunits, 5 of which are encoded in the nucleus.

Its subcellular location is the plastid. It is found in the chloroplast thylakoid membrane. The enzyme catalyses a plastoquinone + NADH + (n+1) H(+)(in) = a plastoquinol + NAD(+) + n H(+)(out). It carries out the reaction a plastoquinone + NADPH + (n+1) H(+)(in) = a plastoquinol + NADP(+) + n H(+)(out). Its function is as follows. NDH shuttles electrons from NAD(P)H:plastoquinone, via FMN and iron-sulfur (Fe-S) centers, to quinones in the photosynthetic chain and possibly in a chloroplast respiratory chain. The immediate electron acceptor for the enzyme in this species is believed to be plastoquinone. Couples the redox reaction to proton translocation, and thus conserves the redox energy in a proton gradient. This is NAD(P)H-quinone oxidoreductase subunit 1, chloroplastic from Physcomitrium patens (Spreading-leaved earth moss).